A 514-amino-acid polypeptide reads, in one-letter code: Maturase K (514 aa).

This sequence belongs to the intron maturase 2 family. MatK subfamily.

The protein resides in the plastid. It is found in the chloroplast. Usually encoded in the trnK tRNA gene intron. Probably assists in splicing its own and other chloroplast group II introns. This Encephalartos altensteinii (Altenstein's bread tree) protein is Maturase K.